A 513-amino-acid polypeptide reads, in one-letter code: GMP synthase [glutamine-hydrolyzing] (513 aa).

In terms of domain architecture, Glutamine amidotransferase type-1 spans 3–200 (SVLVLDFGSQ…LINIAGIRPD (198 aa)). Residue C80 is the Nucleophile of the active site. Catalysis depends on residues H174 and E176. Residues 201-388 (WSSKSFIEHQ…LGIPEDILMR (188 aa)) enclose the GMPS ATP-PPase domain. 228 to 234 (SGGVDST) contributes to the ATP binding site.

In terms of assembly, homodimer.

The enzyme catalyses XMP + L-glutamine + ATP + H2O = GMP + L-glutamate + AMP + diphosphate + 2 H(+). Its pathway is purine metabolism; GMP biosynthesis; GMP from XMP (L-Gln route): step 1/1. Its function is as follows. Catalyzes the synthesis of GMP from XMP. The polypeptide is GMP synthase [glutamine-hydrolyzing] (Chlorobium luteolum (strain DSM 273 / BCRC 81028 / 2530) (Pelodictyon luteolum)).